We begin with the raw amino-acid sequence, 386 residues long: Dual-specificity RNA methyltransferase RlmN (386 aa).

The active-site Proton acceptor is the Glu-96. A Radical SAM core domain is found at 102 to 340 (ENDRATLCVS…VITRRTRGED (239 aa)). Cysteines 109 and 345 form a disulfide. The [4Fe-4S] cluster site is built by Cys-116, Cys-120, and Cys-123. S-adenosyl-L-methionine contacts are provided by residues 170-171 (GE), Ser-202, 224-226 (SIH), and Asn-302. Residue Cys-345 is the S-methylcysteine intermediate of the active site.

It belongs to the radical SAM superfamily. RlmN family. [4Fe-4S] cluster serves as cofactor.

It localises to the cytoplasm. It carries out the reaction adenosine(2503) in 23S rRNA + 2 reduced [2Fe-2S]-[ferredoxin] + 2 S-adenosyl-L-methionine = 2-methyladenosine(2503) in 23S rRNA + 5'-deoxyadenosine + L-methionine + 2 oxidized [2Fe-2S]-[ferredoxin] + S-adenosyl-L-homocysteine. It catalyses the reaction adenosine(37) in tRNA + 2 reduced [2Fe-2S]-[ferredoxin] + 2 S-adenosyl-L-methionine = 2-methyladenosine(37) in tRNA + 5'-deoxyadenosine + L-methionine + 2 oxidized [2Fe-2S]-[ferredoxin] + S-adenosyl-L-homocysteine. Its function is as follows. Specifically methylates position 2 of adenine 2503 in 23S rRNA and position 2 of adenine 37 in tRNAs. m2A2503 modification seems to play a crucial role in the proofreading step occurring at the peptidyl transferase center and thus would serve to optimize ribosomal fidelity. The sequence is that of Dual-specificity RNA methyltransferase RlmN from Colwellia psychrerythraea (strain 34H / ATCC BAA-681) (Vibrio psychroerythus).